We begin with the raw amino-acid sequence, 1192 residues long: Leucine-rich repeat receptor protein kinase EMS1 (1192 aa).

A signal peptide spans 1 to 18 (MAFLTALFLFLFFSFSSS). N-linked (GlcNAc...) asparagine glycosylation is present at Asn47. 28 LRR repeats span residues 64 to 87 (LGRVNSLSLPSLSLRGQIPKEISS), 90 to 112 (NLRELCLAGNQFSGKIPPEIWNL), 114 to 137 (HLQTLDLSGNSLTGLLPRLLSELP), 138 to 160 (QLLYLDLSDNHFSGSLPPSFFIS), 163 to 185 (ALSSLDVSNNSLSGEIPPEIGKL), 187 to 209 (NLSNLYMGLNSFSGQIPSEIGNI), 235 to 257 (HLAKLDLSYNPLKCSIPKSFGEL), 259 to 281 (NLSILNLVSAELIGLIPPELGNC), 283 to 304 (SLKSLMLSFNSLSGPLPLELSE), 330 to 352 (VLDSLLLANNRFSGEIPHEIEDC), 354 to 376 (MLKHLSLASNLLSGSIPRELCGS), 378 to 400 (SLEAIDLSGNLLSGTIEEVFDGC), 402 to 425 (SLGELLLTNNQINGSIPEDLWKLP), 426 to 447 (LMALDLDSNNFTGEIPKSLWKS), 449 to 471 (NLMEFTASYNRLEGYLPAEIGNA), 473 to 496 (SLKRLVLSDNQLTGEIPREIGKLT), 497 to 520 (SLSVLNLNANMFQGKIPVELGDCT), 521 to 543 (SLTTLDLGSNNLQGQIPDKITAL), 545 to 567 (QLQCLVLSYNNLSGSIPSKPSAY), 581 to 603 (HHGIFDLSYNRLSGPIPEELGEC), 605 to 628 (VLVEISLSNNHLSGEIPASLSRLT), 629 to 651 (NLTILDLSGNALTGSIPKEMGNS), 653 to 675 (KLQGLNLANNQLNGHIPESFGLL), 677 to 697 (SLVKLNLTKNKLDGPVPASLG), 701 to 723 (ELTHMDLSFNNLSGELSSELSTM), 725 to 748 (KLVGLYIEQNKFTGEIPSELGNLT), 749 to 772 (QLEYLDVSENLLSGEIPTKICGLP), and 773 to 795 (NLEFLNLAKNNLRGEVPSDGVCQ). Residues Asn171, Asn187, and Asn208 are each glycosylated (N-linked (GlcNAc...) asparagine). Asn259 carries an N-linked (GlcNAc...) asparagine glycan. 2 N-linked (GlcNAc...) asparagine glycosylation sites follow: Asn414 and Asn435. Residue Asn555 is glycosylated (N-linked (GlcNAc...) asparagine). N-linked (GlcNAc...) asparagine glycosylation is present at Asn629. 3 N-linked (GlcNAc...) asparagine glycosylation sites follow: Asn682, Asn711, and Asn746. The helical transmembrane segment at 828-848 (WGIAGLMLGFTIIVFVFVFSL) threads the bilayer. Residue Thr914 is modified to Phosphothreonine. A Protein kinase domain is found at 917–1192 (FSKKNIIGDG…LDVLKALKEI (276 aa)). Residues 923-931 (IGDGGFGTV) and Lys945 each bind ATP. Tyr990 carries the post-translational modification Phosphotyrosine. Asp1043 functions as the Proton acceptor in the catalytic mechanism. At Tyr1085 the chain carries Phosphotyrosine.

This sequence belongs to the protein kinase superfamily. Ser/Thr protein kinase family. Interacts with TPD1. In terms of processing, autophosphorylates in vitro. As to expression, present in young buds, open flowers and siliques but absent from mature leaves and roots. Strongly expressed in the young organ primordia, and as the anthers and ovules developed, became focused in the microsporangia and in the distal and chalazal regions of the ovule. In cv. Landsberg erecta, only expressed in the anthers of young floral buds.

It is found in the cell membrane. It carries out the reaction L-seryl-[protein] + ATP = O-phospho-L-seryl-[protein] + ADP + H(+). The catalysed reaction is L-threonyl-[protein] + ATP = O-phospho-L-threonyl-[protein] + ADP + H(+). Functionally, receptor with a serine/threonine-protein kinase activity required for the specification of the correct number of male archesporial initials and for the subsequent specification of tapetal and middle cell layer identities. In seeds, required for enhancing cell size and the rate of embryonic development. The chain is Leucine-rich repeat receptor protein kinase EMS1 from Arabidopsis thaliana (Mouse-ear cress).